We begin with the raw amino-acid sequence, 140 residues long: Large ribosomal subunit protein uL11 (140 aa).

It belongs to the universal ribosomal protein uL11 family. In terms of assembly, part of the ribosomal stalk of the 50S ribosomal subunit. Interacts with L10 and the large rRNA to form the base of the stalk. L10 forms an elongated spine to which L12 dimers bind in a sequential fashion forming a multimeric L10(L12)X complex. Post-translationally, one or more lysine residues are methylated.

Functionally, forms part of the ribosomal stalk which helps the ribosome interact with GTP-bound translation factors. In Gemmatimonas aurantiaca (strain DSM 14586 / JCM 11422 / NBRC 100505 / T-27), this protein is Large ribosomal subunit protein uL11.